Reading from the N-terminus, the 130-residue chain is Small ribosomal subunit protein uS9 (130 aa).

This sequence belongs to the universal ribosomal protein uS9 family.

This is Small ribosomal subunit protein uS9 from Cupriavidus necator (strain ATCC 17699 / DSM 428 / KCTC 22496 / NCIMB 10442 / H16 / Stanier 337) (Ralstonia eutropha).